The chain runs to 80 residues: RNA-binding protein Hfq (80 aa).

Residues 10 to 70 form the Sm domain; sequence DIFLNQVRKE…ISTISPMKSV (61 aa).

This sequence belongs to the Hfq family. As to quaternary structure, homohexamer.

In terms of biological role, RNA chaperone that binds small regulatory RNA (sRNAs) and mRNAs to facilitate mRNA translational regulation in response to envelope stress, environmental stress and changes in metabolite concentrations. Also binds with high specificity to tRNAs. This chain is RNA-binding protein Hfq, found in Ruminiclostridium cellulolyticum (strain ATCC 35319 / DSM 5812 / JCM 6584 / H10) (Clostridium cellulolyticum).